Here is a 332-residue protein sequence, read N- to C-terminus: Leucine carboxyl methyltransferase 1 (332 aa).

Residues R71, G96, D120, 169-170 (DL), and E196 each bind S-adenosyl-L-methionine.

Belongs to the methyltransferase superfamily. LCMT family.

It catalyses the reaction [phosphatase 2A protein]-C-terminal L-leucine + S-adenosyl-L-methionine = [phosphatase 2A protein]-C-terminal L-leucine methyl ester + S-adenosyl-L-homocysteine. Methylates the carboxyl group of the C-terminal leucine residue of protein phosphatase 2A catalytic subunits to form alpha-leucine ester residues. This Rattus norvegicus (Rat) protein is Leucine carboxyl methyltransferase 1 (Lcmt1).